An 807-amino-acid polypeptide reads, in one-letter code: F-box protein YLR352W (807 aa).

In terms of domain architecture, F-box spans 220-266 (LNDCIDLPSHVLWKILKMLPELQKLDLSHTSIDDSTLYHGIPHWKNL). The span at 607–616 (DNNSHVEDSQ) shows a compositional bias: basic and acidic residues. Disordered regions lie at residues 607–647 (DNNS…NPFA) and 716–739 (HLFE…EHSS). 2 stretches are compositionally biased toward polar residues: residues 627-644 (SLLS…SSAN) and 723-736 (SRSG…LTGE).

In terms of assembly, interacts with SKP1 and CDC53. Component of the probable SCF(YBR352W) complex containing CDC53, SKP1, RBX1 and YBR352W.

Its pathway is protein modification; protein ubiquitination. Functionally, substrate recognition component of a SCF (SKP1-CUL1-F-box protein) E3 ubiquitin-protein ligase complex which mediates the ubiquitination and subsequent proteasomal degradation of target proteins. Probably recognizes and binds to phosphorylated target proteins. This chain is F-box protein YLR352W, found in Saccharomyces cerevisiae (strain ATCC 204508 / S288c) (Baker's yeast).